The primary structure comprises 259 residues: UPF0246 protein Aave_1172 (259 aa).

This sequence belongs to the UPF0246 family.

The chain is UPF0246 protein Aave_1172 from Paracidovorax citrulli (strain AAC00-1) (Acidovorax citrulli).